A 593-amino-acid chain; its full sequence is ATPase family AAA domain-containing protein 3-B (593 aa).

Disordered stretches follow at residues M1–S64, E109–Q129, and Q145–A164. Topologically, residues M1–K242 are mitochondrial intermembrane. A compositionally biased stretch (pro residues) spans P12–P27. Basic and acidic residues-rich tracts occupy residues G33–S44, R53–S64, E109–Q121, and E150–A164. A coiled-coil region spans residues L51 to R215. A helical transmembrane segment spans residues V243–A260. At K261–V593 the chain is on the mitochondrial matrix side. ATP is bound at residue G348 to T355. The span at A570–G580 shows a compositional bias: basic and acidic residues. Residues A570–V593 are disordered.

Belongs to the AAA ATPase family. As to quaternary structure, can form homooligomers. Homodimer formation at the N-terminus may be regulated by ATP and is required for the interaction with the inner surface of the mitochondrial outer membrane and correct mitochondrial homeostasis.

The protein resides in the mitochondrion inner membrane. It localises to the mitochondrion matrix. It is found in the mitochondrion nucleoid. The catalysed reaction is ATP + H2O = ADP + phosphate + H(+). Its function is as follows. Essential for mitochondrial network organization, mitochondrial metabolism and cell growth at organism and cellular level. May play an important role in mitochondrial protein synthesis. May also participate in mitochondrial DNA replication. May bind to mitochondrial DNA D-loops and contribute to nucleoid stability. Required for enhanced channeling of cholesterol for hormone-dependent steroidogenesis. Involved in mitochondrial-mediated antiviral innate immunity. Required to protect mitochondria from the PERK-mediated unfolded protein response: specifically inhibits the activity of EIF2AK3/PERK at mitochondria-endoplasmic reticulum contact sites, thereby providing a safe haven for mitochondrial protein translation during endoplasmic reticulum stress. Ability to inhibit EIF2AK3/PERK is independent of its ATPase activity. Also involved in the mitochondrial DNA damage response by promoting signaling between damaged genomes and the mitochondrial membrane, leading to activation of the integrated stress response (ISR). The polypeptide is ATPase family AAA domain-containing protein 3-B (atad3-b) (Xenopus laevis (African clawed frog)).